The following is a 232-amino-acid chain: Large ribosomal subunit protein uL1 (232 aa).

It belongs to the universal ribosomal protein uL1 family. As to quaternary structure, part of the 50S ribosomal subunit.

Functionally, binds directly to 23S rRNA. The L1 stalk is quite mobile in the ribosome, and is involved in E site tRNA release. Its function is as follows. Protein L1 is also a translational repressor protein, it controls the translation of the L11 operon by binding to its mRNA. In Burkholderia cenocepacia (strain ATCC BAA-245 / DSM 16553 / LMG 16656 / NCTC 13227 / J2315 / CF5610) (Burkholderia cepacia (strain J2315)), this protein is Large ribosomal subunit protein uL1.